The sequence spans 259 residues: Flagellar brake protein YcgR (259 aa).

In terms of domain architecture, PilZ spans 129–246 (QRREFYRLQT…DNAIQRYIFK (118 aa)).

It belongs to the YcgR family. Monomer. Interacts with the flagellar basal bodies.

The protein localises to the bacterial flagellum basal body. Its function is as follows. Acts as a flagellar brake, regulating swimming and swarming in a bis-(3'-5') cyclic diguanylic acid (c-di-GMP)-dependent manner. Binds 1 c-di-GMP dimer per subunit. Increasing levels of c-di-GMP lead to decreased motility. This is Flagellar brake protein YcgR from Azoarcus sp. (strain BH72).